A 320-amino-acid chain; its full sequence is Olfactory receptor 51E2 (320 aa).

Over 1 to 27 the chain is Extracellular; the sequence is MSSCNFTHATFLLIGIPGLEEAHFWFG. N5 carries an N-linked (GlcNAc...) asparagine glycan. Residues 28–48 form a helical membrane-spanning segment; sequence FPLLSMYAVALFGNCIVVFIV. The Cytoplasmic segment spans residues 49 to 53; it reads RTERS. Residues 54–74 form a helical membrane-spanning segment; it reads LHAPMYLFLCMLAAIDLALST. Residues 75 to 98 lie on the Extracellular side of the membrane; sequence STMPKILALFWFDSREITFDACLA. C96 and C178 form a disulfide bridge. Residues 99-119 traverse the membrane as a helical segment; that stretch reads QMFFIHTLSAIESTILLAMAF. Residues 120 to 141 lie on the Cytoplasmic side of the membrane; the sequence is DRYVAICHPLRHAAVLNNTVTV. Residues 142–162 form a helical membrane-spanning segment; the sequence is QIGMVALVRGSLFFFPLPLLI. The Extracellular portion of the chain corresponds to 163–200; sequence KRLAFCHSNVLSHSYCVHQDVMKLAYTDTLPNVVYGLT. A helical transmembrane segment spans residues 201-221; that stretch reads AILLVMGVDVMFISLSYFLII. The Cytoplasmic segment spans residues 222–239; it reads RTVLQLPSKSERAKAFGT. A helical transmembrane segment spans residues 240 to 260; it reads CVSHISVVLAFYVPLIGLSVV. Residues 261 to 269 lie on the Extracellular side of the membrane; that stretch reads HRFGNSLDP. A helical membrane pass occupies residues 270 to 290; it reads IVHVLMGDVYLLLPPVINPII. The Cytoplasmic segment spans residues 291–320; it reads YGAKTKQIRTRVLAMFKISCDKDIEAGGNT.

Belongs to the G-protein coupled receptor 1 family. In terms of tissue distribution, in brain, expressed in medulla oblongata by cells close to the fourth ventricle, in the area postrema, the nucleus tractus solitarius. Expressed in olfactory epithelium and vomeronasal organ. Expressed in kidney by large renal vessels, renal afferent arterioles, and extrarenal vascular beds. In small resistance vessels the expression is restricted to cells of the juxtaglomerular afferent arteriole, which mediate renin secretion. Also detected in small blood vessels in a variety of tissues including heart, diaphragm, skeletal muscle, and skin. In the heart, esophagus, and stomach it is detected in axons of autonomic neurons and neurons of the enteric plexus. Also detected in colon and liver. Expressed in the glomus cells of the carotid body.

Its subcellular location is the cell membrane. It localises to the early endosome membrane. Its function is as follows. Olfactory receptor. The activity of this receptor is probably mediated by G-proteins which induce elevation of intracellular Ca(2+), cAMP and activation of phosphorylation of the protein kinases PKA and MAPK3/MAPK1. Activation of OR51E2 may affect melanocyte proliferation, differentiation, and melanogenesis and may increase proliferation and migration of primary retinal pigment epithelial (RPE) cells. Activated by the short chain fatty acids (SCFA), acetate and propionate. In response to SCFA, may positively regulate renin secretion and increase blood pressure. May also be activated by steroid hormones and regulate cell proliferation. Activated by L-lactate in glomus cells. The chain is Olfactory receptor 51E2 (Or51e2) from Mus musculus (Mouse).